The following is a 381-amino-acid chain: MSTIKYRAACDHCSATKIKCTQERPQCTRCRALGRDCHYSRSLRAGKPPRSSQGLNRKISNAPVLPRQNTPVSNPTSMSSKPEHWPTMPTSYPTPQAAAPTAEIFHFPDLSSAATSSSSSPANTDWFFDFNSGSADGLGDLTPPLVVTAPHLPPLDHDLKHPVFPTQGIHFGAFADLISLPPASPLLPSPSLADGDRCAKLATETLNSLYDMPANHLHGSGNRHPSVDQTLSTCARAVQAIHELVNCSCQKDLYLPMLIIIVASKIVAWYQAVAYIRDPGTGFADGKQCFREVVVEGPLNIGAYQLDDEVGWTLKNQIVLGQLQRLNEAVNIYDRRYCSDSLGGQMTEGGKLYASMVGFVKSTLQFTIHALEGRIRSGHPR.

Residues C10–C37 constitute a DNA-binding region (zn(2)-C6 fungal-type). The interval R41–M88 is disordered. 2 stretches are compositionally biased toward polar residues: residues R50 to I59 and R67 to S80.

It localises to the nucleus. In terms of biological role, transcription factor that regulates the expression of the hps1-dma1 gene cluster that probably mediates the biosynthesis a derivative of cyclopiazonic acid (CPA). Further studies are required to whether the CPA-like hps1-dma1 cluster is functional or a non-functional relic reflecting evolution of D.septosporum. In Dothistroma septosporum (strain NZE10 / CBS 128990) (Red band needle blight fungus), this protein is Hps1-dma1 cluster transcription factor tfc7 (tfc7).